The sequence spans 373 residues: Aromatic amino acid aminotransferase (373 aa).

The residue at position 212 (Lys-212) is an N6-(pyridoxal phosphate)lysine.

Belongs to the class-II pyridoxal-phosphate-dependent aminotransferase family. As to quaternary structure, homodimer. Pyridoxal 5'-phosphate is required as a cofactor.

The catalysed reaction is an aromatic L-alpha-amino acid + 2-oxoglutarate = an aromatic oxo-acid + L-glutamate. Its function is as follows. Aminotransferase that catalyzes the conversion of aromatic amino acids and 2-oxoglutarate into corresponding aromatic oxo acids and L-glutamate. The chain is Aromatic amino acid aminotransferase from Corynebacterium jeikeium (strain K411).